The primary structure comprises 176 residues: Cytochrome b (176 aa).

Transmembrane regions (helical) follow at residues 33–53 (FGSL…FLAM), 77–98 (WLLR…YLHI), and 113–133 (WNVG…GYVL). 2 residues coordinate heme b: His-83 and His-97.

It belongs to the cytochrome b family. As to quaternary structure, the cytochrome bc1 complex contains 11 subunits: 3 respiratory subunits (MT-CYB, CYC1 and UQCRFS1), 2 core proteins (UQCRC1 and UQCRC2) and 6 low-molecular weight proteins (UQCRH/QCR6, UQCRB/QCR7, UQCRQ/QCR8, UQCR10/QCR9, UQCR11/QCR10 and a cleavage product of UQCRFS1). This cytochrome bc1 complex then forms a dimer. Heme b is required as a cofactor.

It is found in the mitochondrion inner membrane. Component of the ubiquinol-cytochrome c reductase complex (complex III or cytochrome b-c1 complex) that is part of the mitochondrial respiratory chain. The b-c1 complex mediates electron transfer from ubiquinol to cytochrome c. Contributes to the generation of a proton gradient across the mitochondrial membrane that is then used for ATP synthesis. This is Cytochrome b (MT-CYB) from Eumops glaucinus (Wagner's mastiff bat).